Reading from the N-terminus, the 258-residue chain is Indole-3-glycerol phosphate synthase (258 aa).

Belongs to the TrpC family.

The catalysed reaction is 1-(2-carboxyphenylamino)-1-deoxy-D-ribulose 5-phosphate + H(+) = (1S,2R)-1-C-(indol-3-yl)glycerol 3-phosphate + CO2 + H2O. The protein operates within amino-acid biosynthesis; L-tryptophan biosynthesis; L-tryptophan from chorismate: step 4/5. This is Indole-3-glycerol phosphate synthase from Exiguobacterium sibiricum (strain DSM 17290 / CCUG 55495 / CIP 109462 / JCM 13490 / 255-15).